Consider the following 141-residue polypeptide: MAKKVTAQIKLQLPAGKATPAPPVGPALGQHGVNIMEFCKRFNAETADKAGMILPVVITVYEDKSFTFIIKTPPASFLLMKAAGLEKGSSEPKRKIVGKVTRKQIEEIARTKMPDLNANSLEAAMKIIEGTAKSMGIEVVD.

The protein belongs to the universal ribosomal protein uL11 family. As to quaternary structure, part of the ribosomal stalk of the 50S ribosomal subunit. Interacts with L10 and the large rRNA to form the base of the stalk. L10 forms an elongated spine to which L12 dimers bind in a sequential fashion forming a multimeric L10(L12)X complex. Post-translationally, one or more lysine residues are methylated.

Its function is as follows. Forms part of the ribosomal stalk which helps the ribosome interact with GTP-bound translation factors. The chain is Large ribosomal subunit protein uL11 from Thermotoga petrophila (strain ATCC BAA-488 / DSM 13995 / JCM 10881 / RKU-1).